Consider the following 488-residue polypeptide: Altronate oxidoreductase (488 aa).

Position 18-29 (18-29 (VIQFGEGNFLRA)) interacts with NAD(+).

The protein belongs to the mannitol dehydrogenase family. UxaB subfamily.

It catalyses the reaction D-altronate + NAD(+) = keto-D-tagaturonate + NADH + H(+). It functions in the pathway carbohydrate metabolism; pentose and glucuronate interconversion. The protein is Altronate oxidoreductase of Pectobacterium carotovorum subsp. carotovorum (strain PC1).